Here is a 224-residue protein sequence, read N- to C-terminus: Thiamine-triphosphatase (224 aa).

An N-acetylalanine modification is found at Ala2. The region spanning 5-201 (LIEVERKFTP…AKLLVYLQRF (197 aa)) is the CYTH domain. Glu7 and Glu9 together coordinate Mg(2+). Residues Lys11, Arg55, Arg57, Lys65, and Arg125 each coordinate substrate. Residues Asp145, Glu157, and Glu159 each contribute to the Mg(2+) site. Residue Glu157 coordinates substrate. Substrate is bound at residue Lys193.

The protein belongs to the ThTPase family. In terms of assembly, monomer. Requires Mg(2+) as cofactor.

The protein localises to the cytoplasm. It catalyses the reaction thiamine triphosphate + H2O = thiamine diphosphate + phosphate + H(+). In terms of biological role, hydrolase highly specific for thiamine triphosphate (ThTP). This chain is Thiamine-triphosphatase (Thtpa), found in Rattus norvegicus (Rat).